The sequence spans 346 residues: Biotin synthase (346 aa).

The Radical SAM core domain occupies 41–265; that stretch reads NEVQISTLLS…MMPHSYVRLS (225 aa). [4Fe-4S] cluster is bound by residues cysteine 56, cysteine 60, and cysteine 63. [2Fe-2S] cluster is bound by residues cysteine 100, cysteine 131, cysteine 191, and arginine 263.

This sequence belongs to the radical SAM superfamily. Biotin synthase family. Homodimer. It depends on [4Fe-4S] cluster as a cofactor. [2Fe-2S] cluster is required as a cofactor.

The enzyme catalyses (4R,5S)-dethiobiotin + (sulfur carrier)-SH + 2 reduced [2Fe-2S]-[ferredoxin] + 2 S-adenosyl-L-methionine = (sulfur carrier)-H + biotin + 2 5'-deoxyadenosine + 2 L-methionine + 2 oxidized [2Fe-2S]-[ferredoxin]. The protein operates within cofactor biosynthesis; biotin biosynthesis; biotin from 7,8-diaminononanoate: step 2/2. In terms of biological role, catalyzes the conversion of dethiobiotin (DTB) to biotin by the insertion of a sulfur atom into dethiobiotin via a radical-based mechanism. This Pseudoalteromonas translucida (strain TAC 125) protein is Biotin synthase.